The chain runs to 111 residues: Large ribosomal subunit protein P2 (111 aa).

Over residues 63–84 the composition is skewed to low complexity; that stretch reads ASMPTGGAPAAAAGGAATAPAA. The tract at residues 63-111 is disordered; sequence ASMPTGGAPAAAAGGAATAPAAEAKEAKKEEKKEESEEEDEDMGFGLFD. Positions 85–97 are enriched in basic and acidic residues; it reads EAKEAKKEEKKEE. Serine 98 bears the Phosphoserine mark.

Part of the ribosomal stalk of the large ribosomal subunit; P1 and P2 exist as dimers which assemble on the P0 scaffold.

Its function is as follows. Plays an important role in the elongation step of protein synthesis. The protein is Large ribosomal subunit protein P2 of Artemia salina (Brine shrimp).